The chain runs to 246 residues: Triosephosphate isomerase (246 aa).

9-11 (NWK) contributes to the substrate binding site. His99 acts as the Electrophile in catalysis. Residue Glu168 is the Proton acceptor of the active site. Substrate contacts are provided by residues Gly174, Ser207, and 228–229 (GG).

This sequence belongs to the triosephosphate isomerase family. Homodimer.

It localises to the cytoplasm. The catalysed reaction is D-glyceraldehyde 3-phosphate = dihydroxyacetone phosphate. It participates in carbohydrate biosynthesis; gluconeogenesis. Its pathway is carbohydrate degradation; glycolysis; D-glyceraldehyde 3-phosphate from glycerone phosphate: step 1/1. In terms of biological role, involved in the gluconeogenesis. Catalyzes stereospecifically the conversion of dihydroxyacetone phosphate (DHAP) to D-glyceraldehyde-3-phosphate (G3P). The sequence is that of Triosephosphate isomerase from Prochlorococcus marinus (strain NATL1A).